Here is a 237-residue protein sequence, read N- to C-terminus: 1-(5-phosphoribosyl)-5-[(5-phosphoribosylamino)methylideneamino] imidazole-4-carboxamide isomerase (237 aa).

D8 acts as the Proton acceptor in catalysis. The active-site Proton donor is the D129.

Belongs to the HisA/HisF family.

Its subcellular location is the cytoplasm. The enzyme catalyses 1-(5-phospho-beta-D-ribosyl)-5-[(5-phospho-beta-D-ribosylamino)methylideneamino]imidazole-4-carboxamide = 5-[(5-phospho-1-deoxy-D-ribulos-1-ylimino)methylamino]-1-(5-phospho-beta-D-ribosyl)imidazole-4-carboxamide. It participates in amino-acid biosynthesis; L-histidine biosynthesis; L-histidine from 5-phospho-alpha-D-ribose 1-diphosphate: step 4/9. In Roseiflexus sp. (strain RS-1), this protein is 1-(5-phosphoribosyl)-5-[(5-phosphoribosylamino)methylideneamino] imidazole-4-carboxamide isomerase.